The chain runs to 379 residues: MGVDLSDINDSLFKLSDKLSNDLAKQRNLCIVKEPSFSIEEHIKCFTTCINTYKPFSCLKHANWALLLAKKKSDTGLIGYCQSLRGLAYYLLEQYQSSAICFGFALKHLKKEDLTKWQVQLDSMLTIVHEQQNQDTSSLIPDECPNIPELEAAKIEGDEEFLNMSLKAPEGQIEKNEEKLSNRIRYDWSQTSFSLNIDIYAKKVKDEDVSLLMEKNTLKIEIKLEDGSIFSLVLDPLYEEIVPEKSSFKLFSSKVEITLIKKVSEIKWEALVKSPANNSVNVYAKDSNHSSASGNTKNKAKDWDSLAKLADLEEDEPTGEAALANLFQNLYKNADDDTRRAMMKSYTESNGTALSTNWKDVKSKTFETKPPQGMEPKKF.

The 92-residue stretch at 181-272 (SNRIRYDWSQ…VSEIKWEALV (92 aa)) folds into the CS domain. An SGS domain is found at 292–379 (ASGNTKNKAK…PPQGMEPKKF (88 aa)). The interval 345-379 (SYTESNGTALSTNWKDVKSKTFETKPPQGMEPKKF) is disordered. Polar residues predominate over residues 346–358 (YTESNGTALSTNW).

Functionally, involved in cyclic AMP (cAMP) pathway, possibly by participating in the assembly or the conformational activation of specific multiprotein complexes. The polypeptide is Glucose-insensitive transcription protein 7 (git7) (Schizosaccharomyces pombe (strain 972 / ATCC 24843) (Fission yeast)).